A 155-amino-acid chain; its full sequence is Ribosome maturation factor RimP (155 aa).

It belongs to the RimP family.

The protein resides in the cytoplasm. Functionally, required for maturation of 30S ribosomal subunits. In Desulforapulum autotrophicum (strain ATCC 43914 / DSM 3382 / VKM B-1955 / HRM2) (Desulfobacterium autotrophicum), this protein is Ribosome maturation factor RimP.